Here is a 407-residue protein sequence, read N- to C-terminus: Arginine deiminase (407 aa).

Cys-397 functions as the Amidino-cysteine intermediate in the catalytic mechanism.

Belongs to the arginine deiminase family.

The protein resides in the cytoplasm. The enzyme catalyses L-arginine + H2O = L-citrulline + NH4(+). Its pathway is amino-acid degradation; L-arginine degradation via ADI pathway; carbamoyl phosphate from L-arginine: step 1/2. The polypeptide is Arginine deiminase (Salmonella choleraesuis (strain SC-B67)).